The sequence spans 846 residues: Translation initiation factor IF-2 (846 aa).

A disordered region spans residues 198 to 219 (YKREEEEKKSKAKKAGGKGFKK). A compositionally biased stretch (basic residues) spans 207–219 (SKAKKAGGKGFKK). Positions 345–512 (SRAPVVTIMG…AVLLQSEVLE (168 aa)) constitute a tr-type G domain. The segment at 354–361 (GHVDHGKT) is G1. Residue 354–361 (GHVDHGKT) coordinates GTP. Residues 379 to 383 (GITQH) form a G2 region. Positions 400-403 (DTPG) are G3. Residues 400–404 (DTPGH) and 454–457 (NKID) each bind GTP. Residues 454–457 (NKID) are G4. Positions 490–492 (SAK) are G5.

Belongs to the TRAFAC class translation factor GTPase superfamily. Classic translation factor GTPase family. IF-2 subfamily.

The protein resides in the cytoplasm. Functionally, one of the essential components for the initiation of protein synthesis. Protects formylmethionyl-tRNA from spontaneous hydrolysis and promotes its binding to the 30S ribosomal subunits. Also involved in the hydrolysis of GTP during the formation of the 70S ribosomal complex. This chain is Translation initiation factor IF-2, found in Francisella tularensis subsp. tularensis (strain SCHU S4 / Schu 4).